Consider the following 260-residue polypeptide: Metallo-beta-lactamase domain-containing protein 1 (260 aa).

The Zn(2+) site is built by histidine 118, histidine 120, aspartate 122, histidine 123, histidine 173, aspartate 196, and histidine 235.

The protein belongs to the metallo-beta-lactamase superfamily. Glyoxalase II family. In terms of assembly, homodimer. Requires Zn(2+) as cofactor.

The protein resides in the cytoplasm. It is found in the cytosol. Its subcellular location is the nucleus. The enzyme catalyses a ribonucleotidyl-ribonucleotide-RNA + H2O = a 3'-end ribonucleotide-RNA + a 5'-end 5'-phospho-ribonucleoside-RNA + H(+). Endoribonuclease that catalyzes the hydrolysis of histone-coding pre-mRNA 3'-end. Involved in histone pre-mRNA processing during the S-phase of the cell cycle, which is required for entering/progressing through S-phase. Cleaves histone pre-mRNA at a major and a minor cleavage site after the 5'-ACCCA-3' and the 5'-ACCCACA-3' sequence, respectively, and located downstream of the stem-loop. May require the presence of the HDE element located at the histone pre-RNA 3'-end to avoid non-specific cleavage. The chain is Metallo-beta-lactamase domain-containing protein 1 from Mus musculus (Mouse).